Consider the following 151-residue polypeptide: Chaperonin GroEL (151 aa).

41–45 (DGTTT) lines the ATP pocket.

This sequence belongs to the chaperonin (HSP60) family. Forms a cylinder of 14 subunits composed of two heptameric rings stacked back-to-back. Interacts with the co-chaperonin GroES.

It is found in the cytoplasm. It carries out the reaction ATP + H2O + a folded polypeptide = ADP + phosphate + an unfolded polypeptide.. Functionally, together with its co-chaperonin GroES, plays an essential role in assisting protein folding. The GroEL-GroES system forms a nano-cage that allows encapsulation of the non-native substrate proteins and provides a physical environment optimized to promote and accelerate protein folding. The protein is Chaperonin GroEL of Mycobacterium avium.